Reading from the N-terminus, the 320-residue chain is Acetyl-coenzyme A carboxylase carboxyl transferase subunit alpha (320 aa).

A CoA carboxyltransferase C-terminal domain is found at 33 to 294 (AFDTEIQALR…GDAVEDELKA (262 aa)).

Belongs to the AccA family. As to quaternary structure, acetyl-CoA carboxylase is a heterohexamer composed of biotin carboxyl carrier protein (AccB), biotin carboxylase (AccC) and two subunits each of ACCase subunit alpha (AccA) and ACCase subunit beta (AccD).

It is found in the cytoplasm. The enzyme catalyses N(6)-carboxybiotinyl-L-lysyl-[protein] + acetyl-CoA = N(6)-biotinyl-L-lysyl-[protein] + malonyl-CoA. Its pathway is lipid metabolism; malonyl-CoA biosynthesis; malonyl-CoA from acetyl-CoA: step 1/1. Functionally, component of the acetyl coenzyme A carboxylase (ACC) complex. First, biotin carboxylase catalyzes the carboxylation of biotin on its carrier protein (BCCP) and then the CO(2) group is transferred by the carboxyltransferase to acetyl-CoA to form malonyl-CoA. The chain is Acetyl-coenzyme A carboxylase carboxyl transferase subunit alpha from Caulobacter vibrioides (strain ATCC 19089 / CIP 103742 / CB 15) (Caulobacter crescentus).